The chain runs to 206 residues: Sclerostin domain-containing protein 1 (206 aa).

An N-terminal signal peptide occupies residues 1–23 (MLPPAIHLSLIPLLCILMRNCLA). The interval 42 to 62 (AHPSSNSTLNQARNGGRHFSS) is disordered. The span at 44-62 (PSSNSTLNQARNGGRHFSS) shows a compositional bias: polar residues. Asn47 carries N-linked (GlcNAc...) asparagine glycosylation. 4 disulfides stabilise this stretch: Cys75–Cys133, Cys89–Cys147, Cys100–Cys163, and Cys104–Cys165. The CTCK domain occupies 75-170 (CRELRSTKYI…TACKCKRYTR (96 aa)). Asn173 carries N-linked (GlcNAc...) asparagine glycosylation. The segment at 176-206 (SHNFESVSPAKPAQHHRERKRASKSSKHSLS) is disordered. Residues 188 to 206 (AQHHRERKRASKSSKHSLS) are compositionally biased toward basic residues.

This sequence belongs to the sclerostin family. Interacts with BMP2, BMP4, BMP6 and BMP7 with high affinity. In terms of tissue distribution, highly expressed in kidney at renal collecting ducts level and weakly in brain.

Its subcellular location is the secreted. May be involved in the onset of endometrial receptivity for implantation/sensitization for the decidual cell reaction. Enhances Wnt signaling and inhibits TGF-beta signaling. Directly antagonizes activity of BMP2, BMP4, BMP6 and BMP7 in a dose-dependent manner. This chain is Sclerostin domain-containing protein 1 (Sostdc1), found in Mus musculus (Mouse).